We begin with the raw amino-acid sequence, 318 residues long: Lymphatic vessel endothelial hyaluronic acid receptor 1 (318 aa).

An N-terminal signal peptide occupies residues 1–23; that stretch reads MLQHTSLVLLLASIWTTRHPVQG. At 24-234 the chain is on the extracellular side; it reads ADLVQDLSIS…EAAGFGGVPT (211 aa). Residues 39 to 129 form the Link domain; sequence GVALVGRNKN…SQKFKAYCHN (91 aa). An N-linked (GlcNAc...) asparagine glycan is attached at N52. Cystine bridges form between C60-C127 and C84-C105. N129 is a glycosylation site (N-linked (GlcNAc...) asparagine). Residues 235–255 form a helical membrane-spanning segment; the sequence is ALLVLALLFFGAAAVLAVCYV. At 256-318 the chain is on the cytoplasmic side; the sequence is KRYVKAFPFT…TTVRCLEAEV (63 aa). Basic and acidic residues predominate over residues 284–305; sequence ADDVNANEESKKTIKNPEEAKS. The tract at residues 284–318 is disordered; it reads ADDVNANEESKKTIKNPEEAKSPPKTTVRCLEAEV.

In terms of assembly, homodimer; disulfide-linked. Interacts with PDGFB and IGFBP3. Forms a transient ternary complex with PDGFB and PDGFRB in TGN. Post-translationally, O-glycosylated.

The protein localises to the membrane. Its function is as follows. Ligand-specific transporter trafficking between intracellular organelles (TGN) and the plasma membrane. Plays a role in autocrine regulation of cell growth mediated by growth regulators containing cell surface retention sequence binding (CRS). May act as a hyaluronan (HA) transporter, either mediating its uptake for catabolism within lymphatic endothelial cells themselves, or its transport into the lumen of afferent lymphatic vessels for subsequent re-uptake and degradation in lymph nodes. Binds to pericelluar hyaluronan matrices deposited on the surface of leukocytes and facilitates cell adhesion and migration through lymphatic endothelium. In Mus musculus (Mouse), this protein is Lymphatic vessel endothelial hyaluronic acid receptor 1 (Lyve1).